An 89-amino-acid chain; its full sequence is Small ribosomal subunit protein uS15 (89 aa).

The protein belongs to the universal ribosomal protein uS15 family. As to quaternary structure, part of the 30S ribosomal subunit. Forms a bridge to the 50S subunit in the 70S ribosome, contacting the 23S rRNA.

Functionally, one of the primary rRNA binding proteins, it binds directly to 16S rRNA where it helps nucleate assembly of the platform of the 30S subunit by binding and bridging several RNA helices of the 16S rRNA. Forms an intersubunit bridge (bridge B4) with the 23S rRNA of the 50S subunit in the ribosome. This chain is Small ribosomal subunit protein uS15, found in Chlorobaculum parvum (strain DSM 263 / NCIMB 8327) (Chlorobium vibrioforme subsp. thiosulfatophilum).